The sequence spans 494 residues: Endoglucanase 22 (494 aa).

The first 21 residues, Met1 to Ser21, serve as a signal peptide directing secretion. Catalysis depends on Asp76, which acts as the Nucleophile. His413 is a catalytic residue. N-linked (GlcNAc...) asparagine glycosylation is present at Asn468. Glu473 is an active-site residue.

Belongs to the glycosyl hydrolase 9 (cellulase E) family.

It localises to the secreted. The enzyme catalyses Endohydrolysis of (1-&gt;4)-beta-D-glucosidic linkages in cellulose, lichenin and cereal beta-D-glucans.. In Arabidopsis thaliana (Mouse-ear cress), this protein is Endoglucanase 22 (GH9B16).